The following is a 126-amino-acid chain: Aspartate 1-decarboxylase (126 aa).

Catalysis depends on S25, which acts as the Schiff-base intermediate with substrate; via pyruvic acid. S25 bears the Pyruvic acid (Ser) mark. T57 serves as a coordination point for substrate. The Proton donor role is filled by Y58. 73 to 75 (GAA) contributes to the substrate binding site.

It belongs to the PanD family. In terms of assembly, heterooctamer of four alpha and four beta subunits. Pyruvate is required as a cofactor. Post-translationally, is synthesized initially as an inactive proenzyme, which is activated by self-cleavage at a specific serine bond to produce a beta-subunit with a hydroxyl group at its C-terminus and an alpha-subunit with a pyruvoyl group at its N-terminus.

The protein resides in the cytoplasm. It catalyses the reaction L-aspartate + H(+) = beta-alanine + CO2. The protein operates within cofactor biosynthesis; (R)-pantothenate biosynthesis; beta-alanine from L-aspartate: step 1/1. Its function is as follows. Catalyzes the pyruvoyl-dependent decarboxylation of aspartate to produce beta-alanine. This chain is Aspartate 1-decarboxylase, found in Nitrosococcus oceani (strain ATCC 19707 / BCRC 17464 / JCM 30415 / NCIMB 11848 / C-107).